We begin with the raw amino-acid sequence, 85 residues long: Large ribosomal subunit protein bL27 (85 aa).

The tract at residues 1 to 21 (MAHKKAGGSTRNGRDSNAKRL) is disordered.

The protein belongs to the bacterial ribosomal protein bL27 family.

This chain is Large ribosomal subunit protein bL27, found in Erwinia tasmaniensis (strain DSM 17950 / CFBP 7177 / CIP 109463 / NCPPB 4357 / Et1/99).